Consider the following 1350-residue polypeptide: MPTFGSKLLACLLLSSVILVSGQFEHYLDSLRASELYEFEDGSLGSIHLLPKGDSETIVLQLEQPIHFYGEQYEQLYINTNGILTFNSEFPEYLNQPFPLEYASIAAFYSNVDTSFSDEGTSISLFESKEQSILDRASSLVRYAFSSQSEFEARQVIVATWRNVGYFDSKTDRLNTFQVALIANEQSTFVQFIYPDGGLNWLQGETAGLGLPDIRAQAGFVAEDGRFYTLNGSGSENARFLSESTNLGVPGVWLFEVAPIENEQNVRSPDNAESLTESPALALSCQAHAHQCHEKAECHDKAEGYCCVCGSGFYGNGKSCLANDQPIRVTGTLTGELNKQPVSEEAKLQSYVVTSEGRTYTTINPLTPELGAQLRLVLPLLTTVPWLFAKSVGGVANGYQLTGGVYTHVSRLQFDSGENLHVNQTFEGLNYWDQLSVKIEIYGEVPAVAADAVLILPDYVEEYTFERPGELKSVQVLNINITEEQRVLGLQVEQRILYRSCLRDDEADPSATKVLQKISKVALDYVERDQALRIGAMSKVGVTPESNACNDGTADCVENSVCVPYEDTYRCDCYHGFAAQLDERGVEVCLDIDECATGSHVCDENAVCDNTEGGFNCYCTEGFEGNGYRCLSNSTADNIEYPPAVEGQAEPTSEPSPNPSPYPDQGQDQEREREDDQYPQPNPYPYPEEQIPQHPDECYRCSKDADCYQGRCTCHEGFDGDGYTCTNICGHGEVWENGRCEPLLLERHDVDPLCDALGECRCPYGYELSEDSQRCTYVQEFDGERNADLIPCDVDENCHINATCNWYGQELRHICTCQPGFRGDGYNCDPISDDSCAIRPDICDVHADCVYEEHLGKSECQCQAGYTGNGFNCQLAAECQSAEHCGENAFCDDGVCRCQADFERDVSDRCVPAGRCGSVFCGSNAICKWDSAEGVQYCDCLDGYQGDALTGCTSKPLSCHVLNNCGIHATCEPTEDPANYECQCIAGFKGDGYVCIEEQNCLNNPTLCDMNAQCRSTNSGLVCVCNQGFFGNGSLCQERQHQDSDFLIVSQGVMIARVPLNGRNVRPISVAQMAIGLDKDCVEGRVYWGDISTKKIVSTKYDGTDLRPFITTDIESPEGIAIDVISRRLYWADSAKDTIEVASLDDPSLRAVIINKQLVNPRGIAVDPYREKLFWSDWDRESPKIEMSNLDGTGRELLLGKDDVTLPNSLVVLENSGEVCYADAGTKKVECIEPQNRQIRTISNELSYPFGITFTHDQFYWTDWTTKKVEIVDSLGARQTPIQPPFFGSHKMYGMTVVEQHCPQYQSPCQISNGGCTDSRLCLVNRQAPSGKSCKCTSASTGCTVLAPGY.

A signal peptide spans 1–22 (MPTFGSKLLACLLLSSVILVSG). Residues 107-260 (AFYSNVDTSF…GVWLFEVAPI (154 aa)) form the NIDO domain. A glycan (N-linked (GlcNAc...) asparagine) is linked at N231. The 41-residue stretch at 281-321 (LALSCQAHAHQCHEKAECHDKAEGYCCVCGSGFYGNGKSCL) folds into the EGF-like 1 domain. Cystine bridges form between C285/C298, C292/C307, and C309/C320. The Nidogen G2 beta-barrel domain occupies 325 to 550 (QPIRVTGTLT…GVTPESNACN (226 aa)). 2 N-linked (GlcNAc...) asparagine glycosylation sites follow: N423 and N480. The EGF-like 2 domain maps to 545–583 (ESNACNDGTADCVENSVCVPYEDTYRCDCYHGFAAQLDE). 5 disulfides stabilise this stretch: C549–C562, C556–C571, C595–C608, C602–C617, and C619–C630. The 41-residue stretch at 591–631 (DIDECATGSHVCDENAVCDNTEGGFNCYCTEGFEGNGYRCL) folds into the EGF-like 3; calcium-binding domain. The N-linked (GlcNAc...) asparagine glycan is linked to N633. The segment at 645 to 691 (VEGQAEPTSEPSPNPSPYPDQGQDQEREREDDQYPQPNPYPYPEEQI) is disordered. EGF-like domains lie at 788-829 (DLIP…YNCD), 832-874 (SDDS…FNCQ), 912-953 (PAGR…TGCT), 955-996 (KPLS…YVCI), and 997-1037 (EEQN…SLCQ). Intrachain disulfides connect C792/C804, C798/C815, C817/C828, C836/C849, C843/C860, C862/C873, C916/C927, C921/C938, C940/C952, C959/C971, C965/C982, C984/C995, C1001/C1014, C1008/C1023, and C1025/C1036. N-linked (GlcNAc...) asparagine glycosylation occurs at N801. An N-linked (GlcNAc...) asparagine glycan is attached at N1032. LDL-receptor class B repeat units lie at residues 1084–1126 (GRVY…DVIS), 1127–1170 (RRLY…DPYR), 1171–1216 (EKLF…LENS), and 1257–1282 (DQFY…QTPI).

Expressed in the basement membrane around the follicular epithelium of the adult ovary (at protein level).

The protein resides in the secreted. The protein localises to the extracellular space. Its subcellular location is the extracellular matrix. It is found in the basement membrane. In terms of biological role, cell adhesion glycoprotein which is widely distributed in basement membranes. Involved in cell-extracellular matrix (ECM) interactions probably by connecting the laminin and collagen IV networks. Required for permeability and mechanical stability of basement membranes, and ECM dependent neural plasticity. Not involved in assembly of the embryonic basement membrane. This chain is Nidogen, found in Drosophila melanogaster (Fruit fly).